The following is a 485-amino-acid chain: GTPase Obg (485 aa).

The Obg domain occupies P2–V159. The 182-residue stretch at A160–R341 folds into the OBG-type G domain. GTP-binding positions include G166 to S173, F191 to V195, D212 to G215, N292 to D295, and S322 to V324. Mg(2+) is bound by residues S173 and T193. The region spanning P359–P437 is the OCT domain. Residues T439–E485 form a disordered region. Basic and acidic residues predominate over residues T452–K468.

It belongs to the TRAFAC class OBG-HflX-like GTPase superfamily. OBG GTPase family. In terms of assembly, monomer. Mg(2+) is required as a cofactor.

The protein resides in the cytoplasm. In terms of biological role, an essential GTPase which binds GTP, GDP and possibly (p)ppGpp with moderate affinity, with high nucleotide exchange rates and a fairly low GTP hydrolysis rate. Plays a role in control of the cell cycle, stress response, ribosome biogenesis and in those bacteria that undergo differentiation, in morphogenesis control. The sequence is that of GTPase Obg from Mycobacterium sp. (strain MCS).